The following is a 142-amino-acid chain: Semaphorin-like protein VACWR164 (142 aa).

The region spanning 1–142 is the Sema domain; the sequence is MNTIKQSFST…MPQMKKILKM (142 aa).

It belongs to the semaphorin family.

This Bos taurus (Bovine) protein is Semaphorin-like protein VACWR164.